The chain runs to 532 residues: Phosphoenolpyruvate carboxykinase (ATP) (532 aa).

The substrate site is built by Arg-58, Tyr-194, and Lys-200. ATP is bound by residues Lys-200, His-220, and 236 to 244 (GLSGTGKTT). The Mn(2+) site is built by Lys-200 and His-220. Asp-257 serves as a coordination point for Mn(2+). Residues Glu-285, Arg-322, 442–443 (RV), and Thr-448 each bind ATP. Arg-322 contacts substrate.

The protein belongs to the phosphoenolpyruvate carboxykinase (ATP) family. It depends on Mn(2+) as a cofactor.

Its subcellular location is the cytoplasm. It catalyses the reaction oxaloacetate + ATP = phosphoenolpyruvate + ADP + CO2. It participates in carbohydrate biosynthesis; gluconeogenesis. In terms of biological role, involved in the gluconeogenesis. Catalyzes the conversion of oxaloacetate (OAA) to phosphoenolpyruvate (PEP) through direct phosphoryl transfer between the nucleoside triphosphate and OAA. The chain is Phosphoenolpyruvate carboxykinase (ATP) from Rubrobacter xylanophilus (strain DSM 9941 / JCM 11954 / NBRC 16129 / PRD-1).